A 431-amino-acid polypeptide reads, in one-letter code: Salivary plasminogen activator beta (431 aa).

Residues methionine 1 to arginine 36 form the signal peptide. An EGF-like domain is found at alanine 37–glutamate 75. Disulfide bonds link cysteine 41–cysteine 52, cysteine 46–cysteine 63, cysteine 65–cysteine 74, cysteine 82–cysteine 163, cysteine 103–cysteine 145, cysteine 134–cysteine 158, cysteine 168–cysteine 299, cysteine 211–cysteine 227, cysteine 219–cysteine 288, cysteine 313–cysteine 388, cysteine 345–cysteine 361, and cysteine 378–cysteine 406. Residues cysteine 82–cysteine 163 form the Kringle domain. An N-linked (GlcNAc...) asparagine glycan is attached at asparagine 139. A Peptidase S1 domain is found at serine 180–arginine 430. Residues histidine 226 and aspartate 275 each act as charge relay system in the active site. Asparagine 352 is a glycosylation site (N-linked (GlcNAc...) asparagine). Serine 382 serves as the catalytic Charge relay system.

It belongs to the peptidase S1 family. In terms of assembly, monomer.

It localises to the secreted. It carries out the reaction Specific cleavage of Arg-|-Val bond in plasminogen to form plasmin.. Functionally, probably essential to support the feeding habits of this exclusively haematophagous animal. Probable potent thrombolytic agent. The sequence is that of Salivary plasminogen activator beta from Desmodus rotundus (Vampire bat).